Consider the following 272-residue polypeptide: Nitrogenase iron protein (272 aa).

8–15 (GKGGIGKS) lines the ATP pocket. Cys-94 serves as a coordination point for [4Fe-4S] cluster. Position 97 is an ADP-ribosylarginine; by dinitrogenase reductase ADP-ribosyltransferase (Arg-97). Cys-129 contributes to the [4Fe-4S] cluster binding site.

Belongs to the NifH/BchL/ChlL family. As to quaternary structure, homodimer. [4Fe-4S] cluster serves as cofactor. Post-translationally, the reversible ADP-ribosylation of Arg-97 inactivates the nitrogenase reductase and regulates nitrogenase activity.

It catalyses the reaction N2 + 8 reduced [2Fe-2S]-[ferredoxin] + 16 ATP + 16 H2O = H2 + 8 oxidized [2Fe-2S]-[ferredoxin] + 2 NH4(+) + 16 ADP + 16 phosphate + 6 H(+). In terms of biological role, the key enzymatic reactions in nitrogen fixation are catalyzed by the nitrogenase complex, which has 2 components: the iron protein and the molybdenum-iron protein. In Alkaliphilus metalliredigens (strain QYMF), this protein is Nitrogenase iron protein.